The chain runs to 191 residues: Shikimate kinase (191 aa).

14 to 19 (GSGKST) is an ATP binding site. Ser-18 contacts Mg(2+). Asp-36, Arg-60, and Gly-82 together coordinate substrate. An ATP-binding site is contributed by Arg-120. Arg-147 is a binding site for substrate.

Belongs to the shikimate kinase family. Monomer. Requires Mg(2+) as cofactor.

Its subcellular location is the cytoplasm. The enzyme catalyses shikimate + ATP = 3-phosphoshikimate + ADP + H(+). It functions in the pathway metabolic intermediate biosynthesis; chorismate biosynthesis; chorismate from D-erythrose 4-phosphate and phosphoenolpyruvate: step 5/7. Its function is as follows. Catalyzes the specific phosphorylation of the 3-hydroxyl group of shikimic acid using ATP as a cosubstrate. This chain is Shikimate kinase, found in Chlorobaculum tepidum (strain ATCC 49652 / DSM 12025 / NBRC 103806 / TLS) (Chlorobium tepidum).